A 255-amino-acid polypeptide reads, in one-letter code: tRNA-cytidine(32) 2-sulfurtransferase (255 aa).

Positions 37–42 (SGGKDS) match the PP-loop motif motif. Positions 112, 115, and 202 each coordinate [4Fe-4S] cluster.

Belongs to the TtcA family. As to quaternary structure, homodimer. Mg(2+) is required as a cofactor. Requires [4Fe-4S] cluster as cofactor.

The protein resides in the cytoplasm. The enzyme catalyses cytidine(32) in tRNA + S-sulfanyl-L-cysteinyl-[cysteine desulfurase] + AH2 + ATP = 2-thiocytidine(32) in tRNA + L-cysteinyl-[cysteine desulfurase] + A + AMP + diphosphate + H(+). The protein operates within tRNA modification. Functionally, catalyzes the ATP-dependent 2-thiolation of cytidine in position 32 of tRNA, to form 2-thiocytidine (s(2)C32). The sulfur atoms are provided by the cysteine/cysteine desulfurase (IscS) system. The chain is tRNA-cytidine(32) 2-sulfurtransferase from Citrifermentans bemidjiense (strain ATCC BAA-1014 / DSM 16622 / JCM 12645 / Bem) (Geobacter bemidjiensis).